The following is a 1050-amino-acid chain: FHIP family protein GE18198 (1050 aa).

2 positions are modified to phosphoserine: Ser498 and Ser805. Disordered stretches follow at residues 800–827 (KGNE…GQLR), 865–888 (TSMF…SASS), 911–954 (TDGR…SGSN), and 968–995 (SNTT…SEPA). Over residues 808–826 (HHSQQQQMATNSGQQQGQL) the composition is skewed to polar residues. Low complexity predominate over residues 872–888 (SASNTSTTPPNGSSASS). Over residues 918-935 (HAQTSAGTCETSLSTQPQ) the composition is skewed to polar residues. Residues 941-954 (TGAIATSATASGSN) show a composition bias toward low complexity. Polar residues predominate over residues 968–977 (SNTTTHSAST).

This sequence belongs to the FHIP family.

In Drosophila yakuba (Fruit fly), this protein is FHIP family protein GE18198.